A 1165-amino-acid chain; its full sequence is Linoleate diol synthase (1165 aa).

A fatty acid alpha-dioxygenase region spans residues 104–448 (TDGLINDLWD…DGAFDDTELV (345 aa)). Position 203 (histidine 203) interacts with heme b. Ca(2+) is bound by residues aspartate 204, serine 219, tyrosine 221, aspartate 223, and serine 225. The active site involves tyrosine 376. Residue histidine 379 participates in heme b binding. Positions 666–1161 (EVLSNQKDYK…ATTMKINWEG (496 aa)) are epoxy alcohol synthase. Cysteine 1080 is a heme binding site. Residues 1114–1134 (RSYPASQWPGQAGRPPRDPAW) are disordered.

Belongs to the peroxidase family. In terms of assembly, homotetramer. The cofactor is heme b. Requires Ca(2+) as cofactor. Heme is required as a cofactor. Post-translationally, the N-terminus is blocked.

It carries out the reaction (9Z,12Z)-octadecadienoate + O2 = (8R,9Z,12Z)-8-hydroperoxyoctadeca-9,12-dienoate. The catalysed reaction is (8R,9Z,12Z)-8-hydroperoxyoctadeca-9,12-dienoate = (7S,8S,9Z,12Z)-7,8-dihydroxyoctadeca-9,12-dienoate. In terms of biological role, 7,8-linoleate diol synthase is a bifunctional enzyme that converts linoleic acid (18:2n-6) into 8-hydroperoxy-8(E),12(Z)-octadecadienoic acid (8-HPODE) and then catalyzes the isomerization of the resulting hydroperoxide to 7,8-dihydroxy-9(Z),12(Z)-octadecadienoic acid (7,8-DiHODE). This chain is Linoleate diol synthase, found in Gaeumannomyces graminis (Turf grass take-all root rot fungus).